We begin with the raw amino-acid sequence, 403 residues long: Argininosuccinate synthase (403 aa).

10–18 provides a ligand contact to ATP; that stretch reads AYSGGVDTS. Tyr89 provides a ligand contact to L-citrulline. Gly119 is an ATP binding site. Thr121, Asn125, and Asp126 together coordinate L-aspartate. Asn125 is a binding site for L-citrulline. Residues Arg129, Ser177, Ser186, Glu262, and Tyr274 each coordinate L-citrulline.

The protein belongs to the argininosuccinate synthase family. Type 1 subfamily. Homotetramer.

Its subcellular location is the cytoplasm. It catalyses the reaction L-citrulline + L-aspartate + ATP = 2-(N(omega)-L-arginino)succinate + AMP + diphosphate + H(+). Its pathway is amino-acid biosynthesis; L-arginine biosynthesis; L-arginine from L-ornithine and carbamoyl phosphate: step 2/3. The polypeptide is Argininosuccinate synthase (Synechococcus sp. (strain JA-3-3Ab) (Cyanobacteria bacterium Yellowstone A-Prime)).